A 433-amino-acid polypeptide reads, in one-letter code: Serine hydroxymethyltransferase (433 aa).

(6S)-5,6,7,8-tetrahydrofolate is bound by residues Leu132 and 136–138; that span reads GHL. An N6-(pyridoxal phosphate)lysine modification is found at Lys241.

Belongs to the SHMT family. In terms of assembly, homodimer. It depends on pyridoxal 5'-phosphate as a cofactor.

Its subcellular location is the cytoplasm. The catalysed reaction is (6R)-5,10-methylene-5,6,7,8-tetrahydrofolate + glycine + H2O = (6S)-5,6,7,8-tetrahydrofolate + L-serine. It participates in one-carbon metabolism; tetrahydrofolate interconversion. Its pathway is amino-acid biosynthesis; glycine biosynthesis; glycine from L-serine: step 1/1. Its function is as follows. Catalyzes the reversible interconversion of serine and glycine with tetrahydrofolate (THF) serving as the one-carbon carrier. This reaction serves as the major source of one-carbon groups required for the biosynthesis of purines, thymidylate, methionine, and other important biomolecules. Also exhibits THF-independent aldolase activity toward beta-hydroxyamino acids, producing glycine and aldehydes, via a retro-aldol mechanism. In Methylobacterium sp. (strain 4-46), this protein is Serine hydroxymethyltransferase.